A 379-amino-acid polypeptide reads, in one-letter code: Dual-specificity RNA methyltransferase RlmN (379 aa).

The active-site Proton acceptor is the glutamate 95. In terms of domain architecture, Radical SAM core spans 101-345 (EETRGTLCVS…TTVRKTRGDD (245 aa)). A disulfide bridge links cysteine 108 with cysteine 350. [4Fe-4S] cluster is bound by residues cysteine 115, cysteine 119, and cysteine 122. S-adenosyl-L-methionine is bound by residues 176-177 (GE), serine 208, 230-232 (SLH), and asparagine 307. Cysteine 350 serves as the catalytic S-methylcysteine intermediate.

Belongs to the radical SAM superfamily. RlmN family. It depends on [4Fe-4S] cluster as a cofactor.

The protein resides in the cytoplasm. It catalyses the reaction adenosine(2503) in 23S rRNA + 2 reduced [2Fe-2S]-[ferredoxin] + 2 S-adenosyl-L-methionine = 2-methyladenosine(2503) in 23S rRNA + 5'-deoxyadenosine + L-methionine + 2 oxidized [2Fe-2S]-[ferredoxin] + S-adenosyl-L-homocysteine. The enzyme catalyses adenosine(37) in tRNA + 2 reduced [2Fe-2S]-[ferredoxin] + 2 S-adenosyl-L-methionine = 2-methyladenosine(37) in tRNA + 5'-deoxyadenosine + L-methionine + 2 oxidized [2Fe-2S]-[ferredoxin] + S-adenosyl-L-homocysteine. Specifically methylates position 2 of adenine 2503 in 23S rRNA and position 2 of adenine 37 in tRNAs. m2A2503 modification seems to play a crucial role in the proofreading step occurring at the peptidyl transferase center and thus would serve to optimize ribosomal fidelity. This chain is Dual-specificity RNA methyltransferase RlmN, found in Burkholderia ambifaria (strain MC40-6).